Reading from the N-terminus, the 92-residue chain is Large ribosomal subunit protein eL43y (92 aa).

The segment at 39–60 adopts a C4-type zinc-finger fold; that stretch reads CEFCGKYGVKRKAVGIWGCKDC.

It belongs to the eukaryotic ribosomal protein eL43 family.

The sequence is that of Large ribosomal subunit protein eL43y (RPL37AC) from Arabidopsis thaliana (Mouse-ear cress).